The sequence spans 570 residues: CRISPR-associated protein Cas8a1/Csx13 (570 aa).

2 disordered regions span residues 1–23 (MACM…AGLR) and 551–570 (GGEA…SEQS).

This sequence belongs to the CRISPR-associated protein Cas8a1/Csx13 family. Myxan subtype subfamily.

Functionally, CRISPR (clustered regularly interspaced short palindromic repeat) is an adaptive immune system that provides protection against mobile genetic elements (viruses, transposable elements and conjugative plasmids). CRISPR clusters contain spacers, sequences complementary to antecedent mobile elements, and target invading nucleic acids. CRISPR clusters are transcribed and processed into CRISPR RNA (crRNA). Its function is as follows. Functions in an unknown fashion to stimulate transcription of fruA independently of the intracellular A- and E-developmental signals. The polypeptide is CRISPR-associated protein Cas8a1/Csx13 (devT) (Myxococcus xanthus (strain DK1622)).